A 313-amino-acid chain; its full sequence is Pyrimidine-specific ribonucleoside hydrolase RihB (313 aa).

Residue Asp-11 is the Proton acceptor of the active site. Ca(2+) contacts are provided by Asp-11, Asp-16, and Val-124. The substrate site is built by Gln-227 and His-239. Asp-240 is a Ca(2+) binding site.

It belongs to the IUNH family. RihB subfamily. Homotetramer. Ca(2+) serves as cofactor.

It catalyses the reaction a pyrimidine ribonucleoside + H2O = a pyrimidine nucleobase + D-ribose. Functionally, hydrolyzes cytidine or uridine to ribose and cytosine or uracil, respectively. Has a clear preference for cytidine over uridine. Strictly specific for ribonucleosides. The sequence is that of Pyrimidine-specific ribonucleoside hydrolase RihB from Escherichia coli O1:K1 / APEC.